A 213-amino-acid chain; its full sequence is ATP-dependent dethiobiotin synthetase BioD (213 aa).

12–17 (EVGKTY) lines the ATP pocket. T16 is a Mg(2+) binding site. K37 is a catalytic residue. ATP-binding positions include D46, 107–110 (EGVG), and 167–168 (NN). Mg(2+) is bound by residues D46 and E107.

Belongs to the dethiobiotin synthetase family. As to quaternary structure, homodimer. It depends on Mg(2+) as a cofactor.

It localises to the cytoplasm. It carries out the reaction (7R,8S)-7,8-diammoniononanoate + CO2 + ATP = (4R,5S)-dethiobiotin + ADP + phosphate + 3 H(+). It participates in cofactor biosynthesis; biotin biosynthesis; biotin from 7,8-diaminononanoate: step 1/2. Catalyzes a mechanistically unusual reaction, the ATP-dependent insertion of CO2 between the N7 and N8 nitrogen atoms of 7,8-diaminopelargonic acid (DAPA, also called 7,8-diammoniononanoate) to form a ureido ring. The polypeptide is ATP-dependent dethiobiotin synthetase BioD (Akkermansia muciniphila (strain ATCC BAA-835 / DSM 22959 / JCM 33894 / BCRC 81048 / CCUG 64013 / CIP 107961 / Muc)).